Consider the following 212-residue polypeptide: Proteasome subunit beta 2 (212 aa).

Positions 1-13 (MSVDEKVARALKG) are cleaved as a propeptide — removed in mature form; by autocatalysis. Catalysis depends on T14, which acts as the Nucleophile.

Belongs to the peptidase T1B family. The 20S proteasome core is composed of 14 alpha and 14 beta subunits that assemble into four stacked heptameric rings, resulting in a barrel-shaped structure. The two inner rings, each composed of seven catalytic beta subunits, are sandwiched by two outer rings, each composed of seven alpha subunits. The catalytic chamber with the active sites is on the inside of the barrel. Has a gated structure, the ends of the cylinder being occluded by the N-termini of the alpha-subunits. Is capped at one or both ends by the proteasome regulatory ATPase, PAN.

It is found in the cytoplasm. The enzyme catalyses Cleavage of peptide bonds with very broad specificity.. With respect to regulation, the formation of the proteasomal ATPase PAN-20S proteasome complex, via the docking of the C-termini of PAN into the intersubunit pockets in the alpha-rings, triggers opening of the gate for substrate entry. Interconversion between the open-gate and close-gate conformations leads to a dynamic regulation of the 20S proteasome proteolysis activity. Functionally, component of the proteasome core, a large protease complex with broad specificity involved in protein degradation. This is Proteasome subunit beta 2 from Ignicoccus hospitalis (strain KIN4/I / DSM 18386 / JCM 14125).